Consider the following 682-residue polypeptide: MARKFDIQKFRNFGIMAHIDAGKTTTSERILFHSGRTHKIGEVHDGGATMDWMEQEKERGITITSAATYVTWKDCELNLIDTPGHVDFTVEVERSLRVLDGAVAVLDAQNGVEPQTETVWRQASKYKVPRIVYVNKMDKTGADFKMCLESLNERLAAHAVAIQLPIGAEANFNGIINLVTMQAYMYDGKQDEEFKVVEIPADMKKEAEEMRHHMIEEVVNFDDEIMEKYLNGNELSEDDIKKCIRKGVLTAEFFPVVCGTSFKNKGVKALLDAVVDYLPSPVDVPPIKGYKDDGSEILIKNEDDGPLAALAFKIATDPYVGKLTFIRVYSGVLKKGSYVLNATKGIKERVSRLVKMHSNNREEIDEIRAGDICAVIGLKDTVTGNSLSSEEKELHLEAMNFAEPVISLAVEPKTKADQEKMAIALSKLSEEDPTFRTYTDDETNQTIISGMGELHLEIIVDRLRREFKVEVNVGAPQVSYRETFTKEADSEGKYIKQSGGRGQYGHVFIKFEPNPEKGFEFVDKIVGGKIPKEYIKPIKAGLEDAMKAGPLSGFPMIDVKATLYDGSYHDVDSSEMAYKIAASMALKEASKTAGLVLLEPIMAVEVTVPEQYFGDAMGDISSRRGSIEGQEQRGNTQVIKAKVPLKEMFGYATDLRSFTQGRGNYVYAFSHYEKAPKSLLKK.

The 275-residue stretch at 8-282 (QKFRNFGIMA…AVVDYLPSPV (275 aa)) folds into the tr-type G domain. GTP is bound by residues 17–24 (AHIDAGKT), 81–85 (DTPGH), and 135–138 (NKMD).

This sequence belongs to the TRAFAC class translation factor GTPase superfamily. Classic translation factor GTPase family. EF-G/EF-2 subfamily.

The protein resides in the cytoplasm. Catalyzes the GTP-dependent ribosomal translocation step during translation elongation. During this step, the ribosome changes from the pre-translocational (PRE) to the post-translocational (POST) state as the newly formed A-site-bound peptidyl-tRNA and P-site-bound deacylated tRNA move to the P and E sites, respectively. Catalyzes the coordinated movement of the two tRNA molecules, the mRNA and conformational changes in the ribosome. This Malacoplasma penetrans (strain HF-2) (Mycoplasma penetrans) protein is Elongation factor G.